The sequence spans 392 residues: Tyrosine--tRNA ligase (392 aa).

Positions 39-48 match the 'HIGH' region motif; that stretch reads PTAPDIHIGH. The 'KMSKS' region motif lies at 223 to 227; the sequence is KMSKS. Residue Lys-226 participates in ATP binding. An S4 RNA-binding domain is found at 331–391; it reads IGIAQLLKQA…GKRRFARVVL (61 aa).

It belongs to the class-I aminoacyl-tRNA synthetase family. TyrS type 2 subfamily. In terms of assembly, homodimer.

The protein resides in the cytoplasm. It catalyses the reaction tRNA(Tyr) + L-tyrosine + ATP = L-tyrosyl-tRNA(Tyr) + AMP + diphosphate + H(+). Functionally, catalyzes the attachment of tyrosine to tRNA(Tyr) in a two-step reaction: tyrosine is first activated by ATP to form Tyr-AMP and then transferred to the acceptor end of tRNA(Tyr). This chain is Tyrosine--tRNA ligase, found in Ralstonia nicotianae (strain ATCC BAA-1114 / GMI1000) (Ralstonia solanacearum).